We begin with the raw amino-acid sequence, 465 residues long: ATP-dependent protease ATPase subunit HslU (465 aa).

ATP-binding positions include Val-20, 62–67, Asp-277, Glu-343, and Arg-415; that span reads GVGKTE.

Belongs to the ClpX chaperone family. HslU subfamily. As to quaternary structure, a double ring-shaped homohexamer of HslV is capped on each side by a ring-shaped HslU homohexamer. The assembly of the HslU/HslV complex is dependent on binding of ATP.

Its subcellular location is the cytoplasm. Its function is as follows. ATPase subunit of a proteasome-like degradation complex; this subunit has chaperone activity. The binding of ATP and its subsequent hydrolysis by HslU are essential for unfolding of protein substrates subsequently hydrolyzed by HslV. HslU recognizes the N-terminal part of its protein substrates and unfolds these before they are guided to HslV for hydrolysis. The chain is ATP-dependent protease ATPase subunit HslU from Geobacillus kaustophilus (strain HTA426).